The following is a 269-amino-acid chain: 23S rRNA (adenosine(1067)-2'-O)-methyltransferase (269 aa).

Arginine 135, arginine 165, leucine 195, glycine 218, isoleucine 238, and leucine 247 together coordinate S-adenosyl-L-methionine.

The protein belongs to the class IV-like SAM-binding methyltransferase superfamily. RNA methyltransferase TsnR/AvirB family. Homodimer.

It carries out the reaction adenosine(1067) in 23S rRNA + S-adenosyl-L-methionine = 2'-O-methyladenosine(1067) in 23S rRNA + S-adenosyl-L-homocysteine + H(+). In terms of biological role, specifically methylates the adenosine-1067 in 23S ribosomal RNA. Confers resistance to antibiotic thiostrepton. The polypeptide is 23S rRNA (adenosine(1067)-2'-O)-methyltransferase (tsnR) (Streptomyces azureus).